The sequence spans 103 residues: Protein translation factor SUI1 homolog (103 aa).

This sequence belongs to the SUI1 family.

The protein is Protein translation factor SUI1 homolog of Hyperthermus butylicus (strain DSM 5456 / JCM 9403 / PLM1-5).